A 78-amino-acid chain; its full sequence is Small ribosomal subunit protein bS20 (78 aa).

It belongs to the bacterial ribosomal protein bS20 family.

In terms of biological role, binds directly to 16S ribosomal RNA. This is Small ribosomal subunit protein bS20 from Streptococcus pneumoniae serotype 2 (strain D39 / NCTC 7466).